The following is a 250-amino-acid chain: MKVDLNADAGESYGAFAYGHDREIFPLVSSANLACGFHGGSPGRILEAVRLAKAHGVAVGAHPGFPDLVGFGRREMALSPEEVYADVLYQIGALSAFLKAEGLPLHHVKPHGALYLKACRDRETARAIALAVKAFDPGLPLVVLPGTVYEEEARKAGLRVVLEAFPERAYLRSGQLAPRSMPGSWITDPEEAARRALRMVLEGKVEALDGGEVAVRADTLCIHGDNPNAPEVARAVREALEQAGVEVRAF.

It belongs to the LamB/PxpA family. Forms a complex composed of PxpA, PxpB and PxpC.

It catalyses the reaction 5-oxo-L-proline + ATP + 2 H2O = L-glutamate + ADP + phosphate + H(+). In terms of biological role, catalyzes the cleavage of 5-oxoproline to form L-glutamate coupled to the hydrolysis of ATP to ADP and inorganic phosphate. This is 5-oxoprolinase subunit A from Thermus thermophilus (strain ATCC 27634 / DSM 579 / HB8).